Reading from the N-terminus, the 217-residue chain is Small ribosomal subunit protein uS3 (217 aa).

Residues 38-106 enclose the KH type-2 domain; the sequence is IRKFVQKELA…QVHINIIEIK (69 aa).

It belongs to the universal ribosomal protein uS3 family. In terms of assembly, part of the 30S ribosomal subunit. Forms a tight complex with proteins S10 and S14.

In terms of biological role, binds the lower part of the 30S subunit head. Binds mRNA in the 70S ribosome, positioning it for translation. This chain is Small ribosomal subunit protein uS3, found in Streptococcus gordonii (strain Challis / ATCC 35105 / BCRC 15272 / CH1 / DL1 / V288).